Consider the following 276-residue polypeptide: Pantothenate synthetase (276 aa).

Position 27–34 (Met27–His34) interacts with ATP. The Proton donor role is filled by His34. Gln58 serves as a coordination point for (R)-pantoate. Gln58 lines the beta-alanine pocket. An ATP-binding site is contributed by Gly147–Asp150. Gln153 lines the (R)-pantoate pocket. Residues Val176 and Leu184–Arg187 each bind ATP.

Belongs to the pantothenate synthetase family. Homodimer.

It is found in the cytoplasm. The enzyme catalyses (R)-pantoate + beta-alanine + ATP = (R)-pantothenate + AMP + diphosphate + H(+). It functions in the pathway cofactor biosynthesis; (R)-pantothenate biosynthesis; (R)-pantothenate from (R)-pantoate and beta-alanine: step 1/1. Its function is as follows. Catalyzes the condensation of pantoate with beta-alanine in an ATP-dependent reaction via a pantoyl-adenylate intermediate. The chain is Pantothenate synthetase from Helicobacter acinonychis (strain Sheeba).